Consider the following 802-residue polypeptide: Mitochondrial inner membrane m-AAA protease component AFG3L2 (802 aa).

The N-terminal 38 residues, 1–38, are a transit peptide targeting the mitochondrion; the sequence is MAHRCLLLWSRGGCRRGLPPLLVPRGCLGPDRRPCLRT. The propeptide at 39 to 66 is removed in mature form; the sequence is LYQYATVQTASSRRSLLRDVIAAYQRFC. A disordered region spans residues 76–124; sequence YFPNGKNGKKASEPKEAVGEKKEPQPSGPQPSGGAGGGGGKRRGKKEDS. Basic and acidic residues predominate over residues 85 to 99; the sequence is KASEPKEAVGEKKEP. Position 116 is an N6-succinyllysine (lysine 116). 2 helical membrane-spanning segments follow: residues 142–162 and 250–270; these read FRMY…YFVF and GSFL…LYTI. ATP-binding residues include valine 309, alanine 310, threonine 351, glycine 352, lysine 353, threonine 354, leucine 355, and histidine 489. Zn(2+) is bound at residue histidine 573. Residue glutamate 574 is part of the active site. Positions 577 and 648 each coordinate Zn(2+). A disordered region spans residues 759-802; sequence VEGTGSLDEDTSLPEGLQDWNKEREKEEKKEKEKEEPLNEKVVS. Residues 778-802 are compositionally biased toward basic and acidic residues; sequence WNKEREKEEKKEKEKEEPLNEKVVS.

In the N-terminal section; belongs to the AAA ATPase family. The protein in the C-terminal section; belongs to the peptidase M41 family. In terms of assembly, homohexamer. Forms heterohexamers with SPG7 and AFG3L1. The m-AAA protease is either composed of homohexamers of AFG3L2 or heterohexamers of AFG3L1, AFG3L2 and/or SPG7. Interacts with MAIP1. Interacts with DNAJC19. Interacts with PHB2. Requires Zn(2+) as cofactor. Post-translationally, upon import into the mitochondrion, the N-terminal transit peptide is cleaved to generate an intermediate form which undergoes autocatalytic proteolytic processing to generate the proteolytically active mature form. As to expression, highly expressed in the cerebellar Purkinje cells.

The protein resides in the mitochondrion inner membrane. It catalyses the reaction ATP + H2O = ADP + phosphate + H(+). Its function is as follows. Catalytic component of the m-AAA protease, a protease that plays a key role in proteostasis of inner mitochondrial membrane proteins, and which is essential for axonal and neuron development. AFG3L2 possesses both ATPase and protease activities: the ATPase activity is required to unfold substrates, threading them into the internal proteolytic cavity for hydrolysis into small peptide fragments. The m-AAA protease carries out protein quality control in the inner membrane of the mitochondria by mediating degradation of mistranslated or misfolded polypeptides. The m-AAA protease complex also promotes the processing and maturation of mitochondrial proteins, such as MRPL32/bL32m, PINK1 and SP7. Mediates protein maturation of the mitochondrial ribosomal subunit MRPL32/bL32m by catalyzing the cleavage of the presequence of MRPL32/bL32m prior to assembly into the mitochondrial ribosome. Required for SPG7 maturation into its active mature form after SPG7 cleavage by mitochondrial-processing peptidase (MPP). Required for the maturation of PINK1 into its 52kDa mature form after its cleavage by mitochondrial-processing peptidase (MPP). Acts as a regulator of calcium in neurons by mediating degradation of SMDT1/EMRE before its assembly with the uniporter complex, limiting the availability of SMDT1/EMRE for MCU assembly and promoting efficient assembly of gatekeeper subunits with MCU. Promotes the proteolytic degradation of GHITM upon hyperpolarization of mitochondria: progressive GHITM degradation leads to respiratory complex I degradation and broad reshaping of the mitochondrial proteome by AFG3L2. Also acts as a regulator of mitochondrial glutathione homeostasis by mediating cleavage and degradation of SLC25A39. SLC25A39 cleavage is prevented when SLC25A39 binds iron-sulfur. Involved in the regulation of OMA1-dependent processing of OPA1. May act by mediating processing of OMA1 precursor, participating in OMA1 maturation. This chain is Mitochondrial inner membrane m-AAA protease component AFG3L2, found in Mus musculus (Mouse).